A 372-amino-acid chain; its full sequence is DSC E3 ubiquitin ligase complex subunit 2 (372 aa).

Transmembrane regions (helical) follow at residues 26 to 46 (VVAG…LHLL), 54 to 74 (ILLW…LFII), 95 to 115 (YMFI…SLLF), 126 to 146 (TFLI…TVFV), and 160 to 180 (VIPM…NAFL). Residues 246 to 314 (TENENQVENP…LPTGPASQLY (69 aa)) form a disordered region. Residues 249 to 268 (ENQVENPVSNADANDSPTRQ) are compositionally biased toward polar residues. The residue at position 264 (Ser264) is a Phosphoserine. Position 266 is a phosphothreonine (Thr266). The segment covering 269–284 (NARATAIASSSNTAAS) has biased composition (low complexity). Positions 286 to 305 (RNRQQISHPPLGRTSSSSVL) are enriched in polar residues. The UBA domain occupies 332 to 368 (EDINTVQTIMQTSRAQAIQALSQTNDVQRAVELLLEQ).

Component of the DSC E3 ubiquitin ligase complex composed of dsc1, dsc2, dsc3 and dsc4.

It is found in the golgi apparatus membrane. It carries out the reaction S-ubiquitinyl-[E2 ubiquitin-conjugating enzyme]-L-cysteine + [acceptor protein]-L-lysine = [E2 ubiquitin-conjugating enzyme]-L-cysteine + N(6)-ubiquitinyl-[acceptor protein]-L-lysine.. The protein operates within protein modification; protein ubiquitination. In terms of biological role, component of the DSC E3 ubiquitin ligase complex which is required for the sre1 transcriptional activator proteolytic cleavage to release the soluble transcription factor from the membrane in low oxygen or sterol conditions. The complex also plays an important role in the multivesicular body (MVB) pathway and functions in a post-endoplasmic reticulum pathway for protein degradation. In Schizosaccharomyces pombe (strain 972 / ATCC 24843) (Fission yeast), this protein is DSC E3 ubiquitin ligase complex subunit 2 (dsc2).